Consider the following 142-residue polypeptide: Large ribosomal subunit protein uL13 (142 aa).

The protein belongs to the universal ribosomal protein uL13 family. In terms of assembly, part of the 50S ribosomal subunit.

This protein is one of the early assembly proteins of the 50S ribosomal subunit, although it is not seen to bind rRNA by itself. It is important during the early stages of 50S assembly. The polypeptide is Large ribosomal subunit protein uL13 (Acinetobacter baumannii (strain AB0057)).